Reading from the N-terminus, the 223-residue chain is Cytidylate kinase (223 aa).

11 to 19 (GPAGVGKST) contacts ATP.

It belongs to the cytidylate kinase family. Type 1 subfamily.

Its subcellular location is the cytoplasm. The catalysed reaction is CMP + ATP = CDP + ADP. The enzyme catalyses dCMP + ATP = dCDP + ADP. This is Cytidylate kinase from Maridesulfovibrio salexigens (strain ATCC 14822 / DSM 2638 / NCIMB 8403 / VKM B-1763) (Desulfovibrio salexigens).